The following is a 102-amino-acid chain: Urease subunit beta (102 aa).

This sequence belongs to the urease beta subunit family. In terms of assembly, heterotrimer of UreA (gamma), UreB (beta) and UreC (alpha) subunits. Three heterotrimers associate to form the active enzyme.

Its subcellular location is the cytoplasm. It catalyses the reaction urea + 2 H2O + H(+) = hydrogencarbonate + 2 NH4(+). The protein operates within nitrogen metabolism; urea degradation; CO(2) and NH(3) from urea (urease route): step 1/1. This is Urease subunit beta from Pseudomonas savastanoi pv. phaseolicola (strain 1448A / Race 6) (Pseudomonas syringae pv. phaseolicola (strain 1448A / Race 6)).